The following is a 239-amino-acid chain: DNA repair protein RecO (239 aa).

The protein belongs to the RecO family.

In terms of biological role, involved in DNA repair and RecF pathway recombination. In Cereibacter sphaeroides (strain ATCC 17029 / ATH 2.4.9) (Rhodobacter sphaeroides), this protein is DNA repair protein RecO.